Consider the following 262-residue polypeptide: Tropinone reductase homolog At2g30670 (262 aa).

NADP(+) is bound at residue 13–37 (LVTGGASGIGHAIVEELAGLGARIY). Substrate is bound at residue S146. Y159 functions as the Proton acceptor in the catalytic mechanism.

It belongs to the short-chain dehydrogenases/reductases (SDR) family. SDR65C subfamily.

This Arabidopsis thaliana (Mouse-ear cress) protein is Tropinone reductase homolog At2g30670.